The sequence spans 2290 residues: Protein Ycf2 (2290 aa).

1644–1651 (GSIGTGRS) serves as a coordination point for ATP.

This sequence belongs to the Ycf2 family.

The protein resides in the plastid. Its subcellular location is the chloroplast stroma. Probable ATPase of unknown function. Its presence in a non-photosynthetic plant (Epifagus virginiana) and experiments in tobacco indicate that it has an essential function which is probably not related to photosynthesis. In Barbarea verna (Land cress), this protein is Protein Ycf2.